Here is a 436-residue protein sequence, read N- to C-terminus: ATP-dependent protease ATPase subunit HslU (436 aa).

ATP is bound by residues Ile19, 61–65 (GVGKT), Asp249, Glu314, and Arg386.

Belongs to the ClpX chaperone family. HslU subfamily. In terms of assembly, a double ring-shaped homohexamer of HslV is capped on each side by a ring-shaped HslU homohexamer. The assembly of the HslU/HslV complex is dependent on binding of ATP.

The protein resides in the cytoplasm. Functionally, ATPase subunit of a proteasome-like degradation complex; this subunit has chaperone activity. The binding of ATP and its subsequent hydrolysis by HslU are essential for unfolding of protein substrates subsequently hydrolyzed by HslV. HslU recognizes the N-terminal part of its protein substrates and unfolds these before they are guided to HslV for hydrolysis. This Bartonella tribocorum (strain CIP 105476 / IBS 506) protein is ATP-dependent protease ATPase subunit HslU.